Consider the following 89-residue polypeptide: Putative regulatory protein CYB_0055 (89 aa).

The protein belongs to the RemA family.

The protein is Putative regulatory protein CYB_0055 of Synechococcus sp. (strain JA-2-3B'a(2-13)) (Cyanobacteria bacterium Yellowstone B-Prime).